The chain runs to 80 residues: Raniseptin-4 (80 aa).

An N-terminal signal peptide occupies residues 1-22 (MAFLKKSLFLVLFLGIVSLSIC). Positions 23 to 49 (EEEKREGEEEEKQEEENEELSEEELRD) are excised as a propeptide.

This sequence belongs to the frog skin active peptide (FSAP) family. Dermaseptin subfamily. Expressed by the skin glands.

It localises to the secreted. In terms of biological role, has antibacterial activity. The protein is Raniseptin-4 of Boana raniceps (Chaco tree frog).